Consider the following 118-residue polypeptide: Large ribosomal subunit protein uL18 (118 aa).

Residues 1–26 form a disordered region; that stretch reads MISKPDKNKIRQKRHRRVRGKLSGTA. The span at 10 to 20 shows a compositional bias: basic residues; sequence IRQKRHRRVRG.

It belongs to the universal ribosomal protein uL18 family. In terms of assembly, part of the 50S ribosomal subunit; part of the 5S rRNA/L5/L18/L25 subcomplex. Contacts the 5S and 23S rRNAs.

Functionally, this is one of the proteins that bind and probably mediate the attachment of the 5S RNA into the large ribosomal subunit, where it forms part of the central protuberance. The protein is Large ribosomal subunit protein uL18 of Streptococcus equi subsp. zooepidemicus (strain H70).